The following is a 133-amino-acid chain: UPF0768 protein C977.18 (133 aa).

This sequence belongs to the UPF0768 family.

This chain is UPF0768 protein C977.18, found in Schizosaccharomyces pombe (strain 972 / ATCC 24843) (Fission yeast).